A 644-amino-acid polypeptide reads, in one-letter code: Threonine--tRNA ligase (644 aa).

Residues 1–61 enclose the TGS domain; sequence MPDIQLPDGS…DQDAEVAIVT (61 aa). Residues 242–535 are catalytic; that stretch reads DHRRIGTELE…LIEHYEGKFP (294 aa). Zn(2+)-binding residues include Cys-335, His-386, and His-512.

The protein belongs to the class-II aminoacyl-tRNA synthetase family. Homodimer. Zn(2+) serves as cofactor.

It localises to the cytoplasm. The catalysed reaction is tRNA(Thr) + L-threonine + ATP = L-threonyl-tRNA(Thr) + AMP + diphosphate + H(+). Catalyzes the attachment of threonine to tRNA(Thr) in a two-step reaction: L-threonine is first activated by ATP to form Thr-AMP and then transferred to the acceptor end of tRNA(Thr). Also edits incorrectly charged L-seryl-tRNA(Thr). The protein is Threonine--tRNA ligase of Acidithiobacillus ferrooxidans (strain ATCC 23270 / DSM 14882 / CIP 104768 / NCIMB 8455) (Ferrobacillus ferrooxidans (strain ATCC 23270)).